A 232-amino-acid polypeptide reads, in one-letter code: Ribonuclease 3 (232 aa).

Positions 5-134 (QTVLKNHFAI…FLGALLLDKD (130 aa)) constitute an RNase III domain. E47 contacts Mg(2+). Residue D51 is part of the active site. D120 and E123 together coordinate Mg(2+). The active site involves E123. One can recognise a DRBM domain in the interval 160 to 229 (DYKTHLQELL…AKNAVEKGLD (70 aa)).

Belongs to the ribonuclease III family. In terms of assembly, homodimer. Requires Mg(2+) as cofactor.

The protein resides in the cytoplasm. It carries out the reaction Endonucleolytic cleavage to 5'-phosphomonoester.. Its function is as follows. Digests double-stranded RNA. Involved in the processing of primary rRNA transcript to yield the immediate precursors to the large and small rRNAs (23S and 16S). Processes some mRNAs, and tRNAs when they are encoded in the rRNA operon. Processes pre-crRNA and tracrRNA of type II CRISPR loci if present in the organism. This is Ribonuclease 3 from Streptococcus pneumoniae (strain P1031).